Reading from the N-terminus, the 99-residue chain is MALTKAEMSEYLFDKLGLSKRDAKELVELFFEEIRRALENGEQVKLSGFGNFDLRDKNQRPGRNPKTGEDIPITARRVVTFRPGQKLKSRVENATPKAE.

This sequence belongs to the bacterial histone-like protein family. In terms of assembly, heterodimer of an alpha and a beta chain.

In terms of biological role, this protein is one of the two subunits of integration host factor, a specific DNA-binding protein that functions in genetic recombination as well as in transcriptional and translational control. The protein is Integration host factor subunit alpha of Enterobacter sp. (strain 638).